The following is a 1404-amino-acid chain: DNA (cytosine-5)-methyltransferase 3 (1404 aa).

Positions 1 to 10 (MKTKAGKQKK) are enriched in basic residues. Positions 1 to 35 (MKTKAGKQKKRSVDSDDDVSRERRPKRATSGTNFK) are disordered. Residues 11-22 (RSVDSDDDVSRE) are compositionally biased toward basic and acidic residues. Residue lysine 486 forms a Glycyl lysine isopeptide (Lys-Gly) (interchain with G-Cter in ubiquitin) linkage. 2 BAH domains span residues 614-748 (RKMD…FSLP) and 788-929 (IKYS…KKLP). The SAM-dependent MTase C5-type domain occupies 969 to 1402 (LATLDIFAGC…RKLKEALHLR (434 aa)). Cysteine 1085 is an active-site residue.

This sequence belongs to the class I-like SAM-binding methyltransferase superfamily. C5-methyltransferase family.

Its subcellular location is the nucleus. The enzyme catalyses a 2'-deoxycytidine in DNA + S-adenosyl-L-methionine = a 5-methyl-2'-deoxycytidine in DNA + S-adenosyl-L-homocysteine + H(+). Its function is as follows. Maintains chromatin CpG methylation that plays a role in genomic imprinting, regulation of embryogenesis and seed viability. Required for proper patterns of CG DNA methylation in dividing cells. Required during the endosperm development in seeds. In Arabidopsis thaliana (Mouse-ear cress), this protein is DNA (cytosine-5)-methyltransferase 3 (MET3).